The sequence spans 410 residues: Arginine deiminase (410 aa).

C399 acts as the Amidino-cysteine intermediate in catalysis.

This sequence belongs to the arginine deiminase family.

The protein localises to the cytoplasm. The catalysed reaction is L-arginine + H2O = L-citrulline + NH4(+). It participates in amino-acid degradation; L-arginine degradation via ADI pathway; carbamoyl phosphate from L-arginine: step 1/2. This is Arginine deiminase from Listeria monocytogenes serotype 4a (strain HCC23).